The primary structure comprises 661 residues: NUAK family SNF1-like kinase 1 (661 aa).

Met1 is modified (N-acetylmethionine). The segment at 1-24 (MEGAAAPVAGDRPDLGLGAPGSPR) is disordered. Position 22 is a phosphoserine (Ser22). The Protein kinase domain occupies 55–306 (YELQETLGKG…IEDIANHWWV (252 aa)). ATP is bound by residues 61–69 (LGKGTYGKV) and Lys84. Asp178 functions as the Proton acceptor in the catalytic mechanism. Phosphothreonine; by LKB1 is present on Thr211. 2 disordered regions span residues 345–421 (TEAK…EGVV) and 442–570 (LPSS…RPSS). Over residues 393-404 (SSKRPKGILKKR) the composition is skewed to basic residues. The GILK motif signature appears at 399–402 (GILK). Ser455 bears the Phosphoserine mark. The span at 518–529 (SCRRKGILKHSS) shows a compositional bias: basic residues. A Phosphoserine; by PKB/AKT1 modification is found at Ser600.

The protein belongs to the protein kinase superfamily. CAMK Ser/Thr protein kinase family. SNF1 subfamily. In terms of assembly, interacts (via GILK motif) with PPP1CB; the interaction is direct and bridges NUAK1 and PPP1R12A. Interacts with CDKN1A. The cofactor is Mg(2+). Ubiquitinated with 'Lys-29'- and 'Lys-33'-linked polyubiquitins which appear to impede LKB1-mediated phosphorylation. Deubiquitinated by USP9X. In terms of processing, phosphorylated at Thr-211 by STK11/LKB1 in complex with STE20-related adapter-alpha (STRADA) pseudo kinase and CAB39. Not dephosphorylated by the myosin PP1 complex when regulating its activity, due to the presence of PPP1R12A, which prevents myosin PP1 from dephosphorylating NUAK1. Phosphorylated by STK38L upon stimulation with IGF1. In terms of tissue distribution, expressed at high levels in heart and brain, and at lower levels in skeletal muscle, kidney, ovary, placenta, lung and liver. Highly up-regulated in colorectal cancer cell lines.

The protein resides in the nucleus. The protein localises to the cytoplasm. It carries out the reaction L-seryl-[protein] + ATP = O-phospho-L-seryl-[protein] + ADP + H(+). It catalyses the reaction L-threonyl-[protein] + ATP = O-phospho-L-threonyl-[protein] + ADP + H(+). Activated by phosphorylation on Thr-211. Activated by phosphorylation at Ser-600 AKT1 during glucose starvation; the relevance of such activation in normal cells is however unsure. Serine/threonine-protein kinase involved in various processes such as cell adhesion, regulation of cell ploidy and senescence, cell proliferation and tumor progression. Phosphorylates ATM, CASP6, LATS1, PPP1R12A and p53/TP53. Acts as a regulator of cellular senescence and cellular ploidy by mediating phosphorylation of 'Ser-464' of LATS1, thereby controlling its stability. Controls cell adhesion by regulating activity of the myosin protein phosphatase 1 (PP1) complex. Acts by mediating phosphorylation of PPP1R12A subunit of myosin PP1: phosphorylated PPP1R12A then interacts with 14-3-3, leading to reduced dephosphorylation of myosin MLC2 by myosin PP1. May be involved in DNA damage response: phosphorylates p53/TP53 at 'Ser-15' and 'Ser-392' and is recruited to the CDKN1A/WAF1 promoter to participate in transcription activation by p53/TP53. May also act as a tumor malignancy-associated factor by promoting tumor invasion and metastasis under regulation and phosphorylation by AKT1. Suppresses Fas-induced apoptosis by mediating phosphorylation of CASP6, thereby suppressing the activation of the caspase and the subsequent cleavage of CFLAR. Regulates UV radiation-induced DNA damage response mediated by CDKN1A. In association with STK11, phosphorylates CDKN1A in response to UV radiation and contributes to its degradation which is necessary for optimal DNA repair. The polypeptide is NUAK family SNF1-like kinase 1 (NUAK1) (Homo sapiens (Human)).